The primary structure comprises 89 residues: Small ribosomal subunit protein uS15 (89 aa).

It belongs to the universal ribosomal protein uS15 family. As to quaternary structure, part of the 30S ribosomal subunit. Forms a bridge to the 50S subunit in the 70S ribosome, contacting the 23S rRNA.

In terms of biological role, one of the primary rRNA binding proteins, it binds directly to 16S rRNA where it helps nucleate assembly of the platform of the 30S subunit by binding and bridging several RNA helices of the 16S rRNA. Forms an intersubunit bridge (bridge B4) with the 23S rRNA of the 50S subunit in the ribosome. The sequence is that of Small ribosomal subunit protein uS15 from Shewanella halifaxensis (strain HAW-EB4).